A 1004-amino-acid chain; its full sequence is Polyhomeotic-like protein 1 (1004 aa).

Residues M1 to S22 show a composition bias toward low complexity. Disordered stretches follow at residues M1–P24, N212–S241, S261–R355, Q432–A512, R556–L589, and T636–V672. Positions N212–K228 are enriched in polar residues. Over residues M279–S303 the composition is skewed to gly residues. Composition is skewed to polar residues over residues Q319 to T329 and S344 to R355. Residues Q432–A447 show a composition bias toward low complexity. Over residues P448–Q458 the composition is skewed to pro residues. A compositionally biased stretch (low complexity) spans V459 to L482. The segment covering S483–P495 has biased composition (pro residues). Positions Q566–Q583 are enriched in low complexity. Phosphoserine is present on S645. K763 participates in a covalent cross-link: Glycyl lysine isopeptide (Lys-Gly) (interchain with G-Cter in SUMO2). The FCS-type zinc finger occupies L791 to K825. The Zn(2+) site is built by C800, C803, C819, and C823. The tract at residues A848 to I928 is disordered. Phosphoserine is present on S898. Phosphothreonine is present on T922. An SAM domain is found at W940–T1004.

As to quaternary structure, homodimer. Component of a PRC1-like complex. Interacts with RNF2 and CBX7. Interacts with PHC2, PHC2 and BMI1.

It localises to the nucleus. Component of a Polycomb group (PcG) multiprotein PRC1-like complex, a complex class required to maintain the transcriptionally repressive state of many genes, including Hox genes, throughout development. PcG PRC1 complex acts via chromatin remodeling and modification of histones; it mediates monoubiquitination of histone H2A 'Lys-119', rendering chromatin heritably changed in its expressibility. Required for proper control of cellular levels of GMNN expression. This is Polyhomeotic-like protein 1 (PHC1) from Homo sapiens (Human).